Consider the following 148-residue polypeptide: Large ribosomal subunit protein uL15 (148 aa).

A disordered region spans residues M1 to L61. A compositionally biased stretch (basic residues) spans T30 to K39.

Belongs to the universal ribosomal protein uL15 family. In terms of assembly, part of the 50S ribosomal subunit.

Binds to the 23S rRNA. This is Large ribosomal subunit protein uL15 from Geobacter sulfurreducens (strain ATCC 51573 / DSM 12127 / PCA).